Reading from the N-terminus, the 260-residue chain is Phosphatidylglycerol--prolipoprotein diacylglyceryl transferase (260 aa).

The next 4 helical transmembrane spans lie at 17–37 (VVKW…SWIF), 52–72 (LTAA…LHVI), 85–105 (ILSG…IGLW), and 113–133 (FNLG…QAIG). An a 1,2-diacyl-sn-glycero-3-phospho-(1'-sn-glycerol)-binding site is contributed by Arg-134. The next 3 membrane-spanning stretches (helical) occupy residues 170–190 (VPTQ…SLFI), 198–218 (GQLF…IGFV), and 227–247 (GLEQ…PFFI).

Belongs to the Lgt family.

It is found in the cell membrane. The catalysed reaction is L-cysteinyl-[prolipoprotein] + a 1,2-diacyl-sn-glycero-3-phospho-(1'-sn-glycerol) = an S-1,2-diacyl-sn-glyceryl-L-cysteinyl-[prolipoprotein] + sn-glycerol 1-phosphate + H(+). Its pathway is protein modification; lipoprotein biosynthesis (diacylglyceryl transfer). In terms of biological role, catalyzes the transfer of the diacylglyceryl group from phosphatidylglycerol to the sulfhydryl group of the N-terminal cysteine of a prolipoprotein, the first step in the formation of mature lipoproteins. This chain is Phosphatidylglycerol--prolipoprotein diacylglyceryl transferase, found in Dehalococcoides mccartyi (strain ATCC BAA-2266 / KCTC 15142 / 195) (Dehalococcoides ethenogenes (strain 195)).